We begin with the raw amino-acid sequence, 339 residues long: Protein RETICULATA-RELATED 2, chloroplastic (339 aa).

Residues 1-58 constitute a chloroplast transit peptide; it reads MAAMAAKLHISTKSDQSNVRLPRLINLSRDPTARVLFPRNGSVSSLHTNFSSPNIMVP. Over residues 68–86 the composition is skewed to gly residues; that stretch reads IGNHGGGSGSGGGGGGYGG. The segment at 68–92 is disordered; sequence IGNHGGGSGSGGGGGGYGGSEEEES. A run of 2 helical transmembrane segments spans residues 148–168 and 213–233; these read FVFSTLVVGSILNFTLMYLLA and VFATVGLAAGLVGTAISNGLI.

Belongs to the RETICULATA family.

Its subcellular location is the plastid. The protein resides in the chloroplast membrane. May play a role in leaf development. The sequence is that of Protein RETICULATA-RELATED 2, chloroplastic from Arabidopsis thaliana (Mouse-ear cress).